The primary structure comprises 833 residues: Histone deacetylase HDA1 (833 aa).

Positions 1 to 13 (MSTGQEEHLDSKL) are enriched in basic and acidic residues. 2 disordered regions span residues 1–40 (MSTG…IQAS) and 760–791 (NGNG…SKRP). A coiled-coil region spans residues 5-52 (QEEHLDSKLENQISEEENQSQNQNFPTAIEDSIQASIEKLDEVDDEIN). Positions 760 to 776 (NGNGNGNNGNSSNGGGN) are enriched in gly residues.

Belongs to the histone deacetylase family. HD type 2 subfamily. In terms of assembly, interacts with BRG1.

The protein resides in the nucleus. The enzyme catalyses N(6)-acetyl-L-lysyl-[histone] + H2O = L-lysyl-[histone] + acetate. Its function is as follows. Responsible for the deacetylation of lysine residues on the N-terminal part of the core histones (H2A, H2B, H3 and H4). Histone deacetylation gives a tag for epigenetic repression and plays an important role in transcriptional regulation, cell cycle progression and developmental events. Histone deacetylases act via the formation of large multiprotein complexes. Deacetylates the YNG2 subunit of NuA4 histone acetyltransferase (HAT) module, leading to the reduction of YNG2 and NuA4 HAT at the promoters of hypha-specific genes. Plays a key role in the regulation of filamentous growth and virulence. Involved in the switch between two heritable states, the white and opaque states. These two cell types differ in many characteristics, including cell structure, mating competence, and virulence. Each state is heritable for many generations, and switching between states occurs stochastically at low frequency. This chain is Histone deacetylase HDA1 (HDA1), found in Candida albicans (strain SC5314 / ATCC MYA-2876) (Yeast).